We begin with the raw amino-acid sequence, 506 residues long: Glutamate--tRNA ligase (506 aa).

A 'HIGH' region motif is present at residues 12 to 22; sequence PSPTGDPHVGT. The short motif at 253–257 is the 'KMSKS' region element; it reads KLSKR. Residue Lys256 coordinates ATP.

Belongs to the class-I aminoacyl-tRNA synthetase family. Glutamate--tRNA ligase type 1 subfamily. In terms of assembly, monomer.

It localises to the cytoplasm. It carries out the reaction tRNA(Glu) + L-glutamate + ATP = L-glutamyl-tRNA(Glu) + AMP + diphosphate. In terms of biological role, catalyzes the attachment of glutamate to tRNA(Glu) in a two-step reaction: glutamate is first activated by ATP to form Glu-AMP and then transferred to the acceptor end of tRNA(Glu). The polypeptide is Glutamate--tRNA ligase (Chlamydia muridarum (strain MoPn / Nigg)).